Consider the following 336-residue polypeptide: Vomeronasal type-1 receptor 102 (336 aa).

The Extracellular segment spans residues 1 to 42; sequence MVGVQICQGMTSEILFFSLQPQFSNMMNKNSRLHIDSNIRNT. A helical transmembrane segment spans residues 43 to 63; the sequence is FFTEIGIGVSANSLLLLFNIF. At 64–75 the chain is on the cytoplasmic side; that stretch reads KFIHGQRSRLTD. A helical transmembrane segment spans residues 76–96; sequence LPIGLLSLINLLMLLIMACIA. At 97–120 the chain is on the extracellular side; it reads TDIFISCRRWDDIICKSLLYLYRT. The cysteines at positions 111 and 198 are disulfide-linked. A helical transmembrane segment spans residues 121 to 140; sequence FRGLSLSTTCLLSVLQAIIL. Over 141–157 the chain is Cytoplasmic; sequence SPRSSCLAKYKHKPPHH. The helical transmembrane segment at 158–178 threads the bilayer; that stretch reads IFCAMLFLSVLYMFISSHLLL. The Extracellular segment spans residues 179-213; that stretch reads SIIATPNLTTNDFIHVSQSCSILPMSYLMQSMFST. The N-linked (GlcNAc...) asparagine glycan is linked to Asn-185. The helical transmembrane segment at 214-234 threads the bilayer; it reads LLAIRNVFLISLIVLSTWYMV. The Cytoplasmic segment spans residues 235-264; sequence ALLCRHRKQTRHLQDTSLSRKASPEQRATR. Residues 265-285 traverse the membrane as a helical segment; the sequence is SILMLRSLFVLMSIFDSIVSC. Topologically, residues 286-296 are extracellular; it reads SRTMYLNDPTS. The chain crosses the membrane as a helical span at residues 297–317; the sequence is YSIQLLVVHIYATVSPFVFMI. Residues 318–336 are Cytoplasmic-facing; that stretch reads TEKHIVNYLKSMYVRVLNV.

Belongs to the G-protein coupled receptor 1 family. As to expression, expressed in 1-4% of neurons of the vomeronasal organ. Only one pheromone receptor gene may be expressed in a particular neuron. Not expressed in the main olfactory epithelium.

Its subcellular location is the cell membrane. In terms of biological role, putative pheromone receptor implicated in the regulation of social as well as reproductive behavior. The chain is Vomeronasal type-1 receptor 102 (Vom1r102) from Rattus norvegicus (Rat).